We begin with the raw amino-acid sequence, 324 residues long: Dermonecrotic toxin Hl-PLD1 (324 aa).

A signal peptide spans 1–35 (MAHCYYNSKRGCNRVMKTVALVVLISTVMVEESRG). The active site involves histidine 50. Positions 70 and 72 each coordinate Mg(2+). Residue histidine 86 is the Nucleophile of the active site. 2 disulfides stabilise this stretch: cysteine 90/cysteine 96 and cysteine 92/cysteine 236. Aspartate 130 contributes to the Mg(2+) binding site.

The protein belongs to the arthropod phospholipase D family. Class II subfamily. Requires Mg(2+) as cofactor. Expressed by the venom gland.

The protein localises to the secreted. The catalysed reaction is an N-(acyl)-sphingosylphosphocholine = an N-(acyl)-sphingosyl-1,3-cyclic phosphate + choline. It catalyses the reaction an N-(acyl)-sphingosylphosphoethanolamine = an N-(acyl)-sphingosyl-1,3-cyclic phosphate + ethanolamine. It carries out the reaction a 1-acyl-sn-glycero-3-phosphocholine = a 1-acyl-sn-glycero-2,3-cyclic phosphate + choline. The enzyme catalyses a 1-acyl-sn-glycero-3-phosphoethanolamine = a 1-acyl-sn-glycero-2,3-cyclic phosphate + ethanolamine. In terms of biological role, dermonecrotic toxins cleave the phosphodiester linkage between the phosphate and headgroup of certain phospholipids (sphingolipid and lysolipid substrates), forming an alcohol (often choline) and a cyclic phosphate. This toxin acts on sphingomyelin (SM) with a high activity. It may also act on ceramide phosphoethanolamine (CPE), lysophosphatidylcholine (LPC) and lysophosphatidylethanolamine (LPE), but not on lysophosphatidylserine (LPS), and lysophosphatidylglycerol (LPG). It acts by transphosphatidylation, releasing exclusively cyclic phosphate products as second products. In vivo, shows dermonecrotic activity when intradermally injected into rabbit skin and is lethal to mice. Induces increased vascular permeability, edema, inflammatory response, and platelet aggregation. Does not show hemolytic activity (at up to 50 ug). This Hemiscorpius lepturus (Scorpion) protein is Dermonecrotic toxin Hl-PLD1.